The following is a 193-amino-acid chain: Ion-translocating oxidoreductase complex subunit B (193 aa).

Residues 1 to 26 (MSTMLIAVILLTLLALFFGVLLGFAA) form a hydrophobic region. The region spanning 32 to 90 (EGNPIVDELEAILPQTQCGQCGYPGCRPYAEAIANGDKVNKCPPGGTATMEKLANLMGV) is the 4Fe-4S domain. [4Fe-4S] cluster is bound by residues Cys-49, Cys-52, Cys-57, Cys-73, Cys-114, Cys-117, Cys-120, Cys-124, Cys-144, Cys-147, Cys-150, and Cys-154. 2 4Fe-4S ferredoxin-type domains span residues 105–134 (KVAY…GAGK) and 136–164 (MHTV…MIPV).

It belongs to the 4Fe4S bacterial-type ferredoxin family. RnfB subfamily. The complex is composed of six subunits: RnfA, RnfB, RnfC, RnfD, RnfE and RnfG. The cofactor is [4Fe-4S] cluster.

It is found in the cell inner membrane. Functionally, part of a membrane-bound complex that couples electron transfer with translocation of ions across the membrane. The protein is Ion-translocating oxidoreductase complex subunit B of Shewanella sp. (strain ANA-3).